Here is a 271-residue protein sequence, read N- to C-terminus: Chymotrypsin-like elastase family member 2A (271 aa).

An N-terminal signal peptide occupies residues 1-16 (MIRTLLLSALVAGALS). Residues 17 to 30 (CGYPTYEVEDDVSR) constitute a propeptide, activation peptide. The 239-residue stretch at 31-269 (VVGGQEATPN…YIDWINSVMA (239 aa)) folds into the Peptidase S1 domain. A disulfide bond links C60 and C76. Active-site charge relay system residues include H75 and D123. Cystine bridges form between C157–C224, C188–C204, and C214–C245. S218 serves as the catalytic Charge relay system.

The protein belongs to the peptidase S1 family. Elastase subfamily. In terms of assembly, interacts with CPA1. Interacts with SERPINA1. In terms of tissue distribution, highly expressed in pancreas (at mRNA and protein levels). Also expressed in adrenal gland and small intestine.

Its subcellular location is the secreted. It catalyses the reaction Preferential cleavage: Leu-|-Xaa, Met-|-Xaa and Phe-|-Xaa. Hydrolyzes elastin.. Its function is as follows. Elastase that enhances insulin signaling and might have a physiologic role in cellular glucose metabolism. Circulates in plasma and reduces platelet hyperactivation, triggers both insulin secretion and degradation, and increases insulin sensitivity. This chain is Chymotrypsin-like elastase family member 2A, found in Mus musculus (Mouse).